Here is a 245-residue protein sequence, read N- to C-terminus: Short-chain dehydrogenase/reductase pyiH (245 aa).

4 residues coordinate NADP(+): Ile18, Arg42, Asp68, and Asn95. Ser150 serves as the catalytic Proton donor.

It belongs to the short-chain dehydrogenases/reductases (SDR) family.

It functions in the pathway mycotoxin biosynthesis. Functionally, short-chain dehydrogenase/reductase; part of the gene cluster that mediates the biosynthesis of the mycotoxin pyrichalasin H, a tyrosine-derived cytochalasan that inhibits the growth of rice seedlings, but also inhibits lymphocyte capping and actin polymerization and alters cell morphology. Pyrichalasin H is indicated as the responsible agent for the genus-specific pathogenicity of M.grisea toward crabgrass. The first step in the pathway is catalyzed by the O-methyltransferase pyiA which methylates free tyrosine to generate the precursor O-methyltyrosine. The hybrid PKS-NRPS pyiS, assisted by the enoyl reductase pyiC, are responsible for fusion of the O-methyltyrosine precursor and the polyketide backbone. The polyketide synthase module (PKS) of pyiS is responsible for the synthesis of the polyketide backbone and the downstream nonribosomal peptide synthetase (NRPS) amidates the carboxyl end of the polyketide with the O-methyltyrosine precursor. As the NRPS A-domain demonstrates substrate tolerance, pyiS can also use phenylalanine, tyrosine and even para-chlorophenylalanine as amino acid precursor, which leads to the production of novel cytochalasans, including halogenated cytochalasans. Because pyiS lacks a designated enoylreductase (ER) domain, the required activity is provided the enoyl reductase pyiC. Reduction by the hydrolyase pyiE leads to 1,5-dihydropyrrolone, which is substrate for dehydration and intra-molecular Diels-Alder cyclization by the Diels-Alderase pyiF to yield the required isoindolone-fused macrocycle. The tailoring cytochrome P450 monooxygenases piyD and piyG catalyze the hydroxylation at C-18 and C-7, respectivily, whereas the short-chain dehydrogenase/reductase pyiH reduces the carbonyl at C-21 in preparation for the transfer of an acetyl group by the acetyltransferase pyiB. These 3 reactions whose order is not clear yet, lead to the production of O-methylpyrichalasin J, a deacetylated pyrichalasin H. Finally, pyiB to converts O-methylpyrichalasin J into the final product pyrichalasin H via acetylation of C-21. The polypeptide is Short-chain dehydrogenase/reductase pyiH (Pyricularia grisea (Crabgrass-specific blast fungus)).